The sequence spans 233 residues: Nickel import system ATP-binding protein NikE (233 aa).

The ABC transporter domain occupies 2 to 228; it reads IELKHVTFGY…DRHPYTKELV (227 aa). 35-42 serves as a coordination point for ATP; the sequence is GESGCGKS.

Belongs to the ABC transporter superfamily. The complex is composed of two ATP-binding proteins (NikD and NikE), two transmembrane proteins (NikB and NikC) and a solute-binding protein (NikA).

The protein resides in the cell membrane. The enzyme catalyses Ni(2+)(out) + ATP + H2O = Ni(2+)(in) + ADP + phosphate + H(+). Functionally, part of the ABC transporter complex NikABCDE (Opp2) involved in nickel import. Probably responsible for energy coupling to the transport system. This Staphylococcus aureus (strain Mu50 / ATCC 700699) protein is Nickel import system ATP-binding protein NikE.